Consider the following 79-residue polypeptide: Small ribosomal subunit protein bS18 (79 aa).

This sequence belongs to the bacterial ribosomal protein bS18 family. In terms of assembly, part of the 30S ribosomal subunit. Forms a tight heterodimer with protein bS6.

In terms of biological role, binds as a heterodimer with protein bS6 to the central domain of the 16S rRNA, where it helps stabilize the platform of the 30S subunit. The chain is Small ribosomal subunit protein bS18 from Bacillus licheniformis (strain ATCC 14580 / DSM 13 / JCM 2505 / CCUG 7422 / NBRC 12200 / NCIMB 9375 / NCTC 10341 / NRRL NRS-1264 / Gibson 46).